Reading from the N-terminus, the 278-residue chain is Cation-dependent mannose-6-phosphate receptor (278 aa).

The signal sequence occupies residues 1-21; sequence MFPLSGCWRTELLLLLLLAVA. Topologically, residues 22–188 are lumenal; the sequence is VRESWQIEEK…ACSPEVSHLS (167 aa). Positions 31–182 constitute an MRH domain; that stretch reads KSCDLVGEKD…EMDSSLACSP (152 aa). A disulfide bridge links Cys-33 with Cys-79. Residues Asn-58, Asn-84, Asn-95, Asn-108, and Asn-114 are each glycosylated (N-linked (GlcNAc...) asparagine). 2 disulfides stabilise this stretch: Cys-133-Cys-168 and Cys-146-Cys-180. The chain crosses the membrane as a helical span at residues 189–209; it reads VGSILLVIFASLVAVYIIGGF. Residues 210–278 are Cytoplasmic-facing; it reads LYQRLVVGAK…EERDDHLLPM (69 aa). A disordered region spans residues 256 to 278; it reads YRGVGDDQLGEESEERDDHLLPM. Ser-268 carries the phosphoserine modification.

As to quaternary structure, homodimer. Binds GGA1, GGA2 and GGA3.

The protein localises to the lysosome membrane. Its function is as follows. Transport of phosphorylated lysosomal enzymes from the Golgi complex and the cell surface to lysosomes. Lysosomal enzymes bearing phosphomannosyl residues bind specifically to mannose-6-phosphate receptors in the Golgi apparatus and the resulting receptor-ligand complex is transported to an acidic prelyosomal compartment where the low pH mediates the dissociation of the complex. This is Cation-dependent mannose-6-phosphate receptor (M6pr) from Rattus norvegicus (Rat).